A 408-amino-acid polypeptide reads, in one-letter code: Argininosuccinate synthase (408 aa).

Residues 10–18 and A37 each bind ATP; that span reads AYSGGLDTS. L-citrulline contacts are provided by Y90 and S95. G120 provides a ligand contact to ATP. T122, N126, and D127 together coordinate L-aspartate. L-citrulline is bound at residue N126. 5 residues coordinate L-citrulline: R130, S181, S190, E266, and Y278.

The protein belongs to the argininosuccinate synthase family. Type 1 subfamily. Homotetramer.

It localises to the cytoplasm. The catalysed reaction is L-citrulline + L-aspartate + ATP = 2-(N(omega)-L-arginino)succinate + AMP + diphosphate + H(+). It functions in the pathway amino-acid biosynthesis; L-arginine biosynthesis; L-arginine from L-ornithine and carbamoyl phosphate: step 2/3. The sequence is that of Argininosuccinate synthase from Cereibacter sphaeroides (strain ATCC 17025 / ATH 2.4.3) (Rhodobacter sphaeroides).